Consider the following 90-residue polypeptide: U7-theraphotoxin-Hhn1b (90 aa).

A signal peptide spans 1–19 (MKTAIFTVVLALAVFAVLS). A propeptide spanning residues 20-50 (FGWEANEKALSEEFTELIHEKEAASETEARE) is cleaved from the precursor. 3 disulfides stabilise this stretch: Cys-51/Cys-65, Cys-58/Cys-70, and Cys-64/Cys-81.

It belongs to the neurotoxin 10 (Hwtx-1) family. 13 (Hntx-13) subfamily. In terms of tissue distribution, expressed by the venom gland.

It is found in the secreted. Functionally, ion channel inhibitor. This chain is U7-theraphotoxin-Hhn1b, found in Cyriopagopus hainanus (Chinese bird spider).